Here is a 193-residue protein sequence, read N- to C-terminus: Partner of Y14 and mago (193 aa).

Disordered stretches follow at residues 1 to 27 (MSTP…DGTW) and 118 to 142 (IQEP…TKRL). A compositionally biased stretch (polar residues) spans 122-137 (TLPSQSVPTESISQSD). The stretch at 139-192 (TKRLKNLRKKLREIEFLEEKIKAGLLKSPDKDQKEKMSKKNEILNEIDILKNSI) forms a coiled coil.

Belongs to the pym family. As to quaternary structure, interacts (via N-terminus) with mago and tsu/Y14; the interaction is direct.

The protein localises to the cytoplasm. It is found in the nucleus. In terms of biological role, regulator of the exon junction complex (EJC), a multiprotein complex that associates immediately upstream of the exon-exon junction on mRNAs and serves as a positional landmarks for the intron exon structure of genes and directs post-transcriptional processes in the cytoplasm such as mRNA export, nonsense-mediated mRNA decay (NMD) or translation. The protein is Partner of Y14 and mago of Bombyx mori (Silk moth).